The primary structure comprises 1033 residues: MPKKALDSRIPTLIKNGCQEKQRSFFVVVGDRARDQVVNLHWLLSQSKVAARPNVLWMYKKDLLGFTSHRKKRENKIKKEIKRGIRDPNSEDPFELFCSITNIRYCYYKESEKILGQTYGMLVLQDFEALTPNLLARTIETVEGGGIVVLLLHKLNSLKQLYTMSMDIHSRYRTEAHSDVTARFNERFILSLGNCENCLVIDDELNVLPISGGKNVKALPPTLEEDNSTQNSIKELQESLGEDHPAGALVGVTKTLDQARAVLTFVESIVEKSLKGTVSLTAGRGRGKSAALGLAIAAAIAHGYSNIFITSPSPENLKTLFEFIFKGFDALNYEEHVDYDIIQSTNPAYHNAIVRVNIFRDHRQTIQYISPEDSNVLGQAELVVIDEAAAIPLPLVRKLIGPYLVFMASTINGYEGTGRSLSLKLLQQLREQSRIYSGSGNNKSDSQSHISGRTLKEISLDEPIRYAMGDRIELWLNKLLCLDAASYVSRMATQGFPHPSECSLYRVSRDTLFSYHPISEAFLQRMMSLYVASHYKNSPNDLQLMSDAPAHQLFVLLPPVDLKNPKLPDPICVIQLALEGSISRESIMNSLSRGQRAGGDLIPWLISQQFQDENFAALGGARIVRIAVSPEHVKMGYGTRAMQLLHEYFEGKFISASEEFKAVKHSLKRIGDEEIENTALQTEKIHVRDAKTMPPLLLKLSELQPEPLHYVGVSYGLTPSLQKFWKREGYCPLYLRQTANDLTGEHTCVMLRVLEGRDSEWLGAFAQNFYRRFLSLLGYQFREFAAITALSVLDACNNGTKYVVNSTSKLTNEEINNVFESYDLKRLESYSNNLLDYHVIVDLLPKLAHLYFSGKFPDSVKLSPVQQSVLLALGLQYKTIDTLEKEFNLPSNQLLAMLVKLSKKIMKCIDEIETKDIEEELGSNKKTESSNSKLPEFTPLQQSLEEELQEGADEAMLALREKQRELINAIDLEKYAIRGNEEDWKAAENQIQKTNGKGARVVSIKGEKRKNNSLDASDKKTKEKPSSKKKFRK.

Residues 285 to 294 and arginine 465 contribute to the ATP site; that span reads GRGKSAALGL. Positions 560–694 constitute an N-acetyltransferase domain; sequence VDLKNPKLPD…IHVRDAKTMP (135 aa). Acetyl-CoA-binding positions include 626-628, 633-639, and arginine 727; these read IAV and VKMGYGT. The segment at 988–1033 is disordered; sequence ENQIQKTNGKGARVVSIKGEKRKNNSLDASDKKTKEKPSSKKKFRK. Residues 1005–1026 show a composition bias toward basic and acidic residues; that stretch reads KGEKRKNNSLDASDKKTKEKPS.

This sequence belongs to the RNA cytidine acetyltransferase family. NAT10 subfamily. As to quaternary structure, interacts with tan1.

Its subcellular location is the nucleus. The protein resides in the nucleolus. The catalysed reaction is a cytidine in 18S rRNA + acetyl-CoA + ATP + H2O = an N(4)-acetylcytidine in 18S rRNA + ADP + phosphate + CoA + H(+). It catalyses the reaction a cytidine in tRNA + acetyl-CoA + ATP + H2O = an N(4)-acetylcytidine in tRNA + ADP + phosphate + CoA + H(+). Functionally, RNA cytidine acetyltransferase with specificity toward both 18S rRNA and tRNAs. Catalyzes the formation of N(4)-acetylcytidine (ac4C) at positions 1297 and 1815 in 18S rRNA. Required for early nucleolar cleavages of precursor rRNA at sites A0, A1 and A2 during 18S rRNA synthesis. Catalyzes the formation of ac4C in serine and leucine tRNAs. Requires the tRNA-binding adapter protein tan1 for full tRNA acetyltransferase activity but not for 18S rRNA acetylation. This is RNA cytidine acetyltransferase from Schizosaccharomyces pombe (strain 972 / ATCC 24843) (Fission yeast).